The chain runs to 109 residues: MSAQPVDLQIFGRSLRVNCPPEQRDALNQAAEDLNQRLQDLKERTRVTNTEQLVFIAALNISYELTQEKAKTRDYASSMEQRIRMLQQTIEQALLEQGRISERPGSKFE.

Positions 21 to 99 form a coiled coil; it reads PEQRDALNQA…IEQALLEQGR (79 aa).

Belongs to the ZapA family. Type 1 subfamily. As to quaternary structure, homodimer. Interacts with FtsZ.

It localises to the cytoplasm. Activator of cell division through the inhibition of FtsZ GTPase activity, therefore promoting FtsZ assembly into bundles of protofilaments necessary for the formation of the division Z ring. It is recruited early at mid-cell but it is not essential for cell division. The polypeptide is Cell division protein ZapA (Klebsiella pneumoniae (strain 342)).